The primary structure comprises 61 residues: Metallothionein-2 (61 aa).

An N-acetylmethionine modification is found at Met-1. The interval 1–29 is beta; the sequence is MDPNCSCATDGSCSCSGSCKCKECKCTTC. The a divalent metal cation site is built by Cys-5, Cys-7, Cys-13, Cys-15, Cys-19, Cys-21, Cys-24, Cys-26, Cys-29, Cys-33, Cys-34, Cys-36, Cys-37, Cys-41, Cys-44, Cys-48, Cys-50, and Cys-57. The segment at 30-61 is alpha; the sequence is KKSCCSCCPVGCAKCSQGCVCKEASEKCSCCA. A Phosphoserine modification is found at Ser-58. A divalent metal cation contacts are provided by Cys-59 and Cys-60.

The protein belongs to the metallothionein superfamily. Type 1 family.

Metallothioneins have a high content of cysteine residues that bind various heavy metals; these proteins are transcriptionally regulated by both heavy metals and glucocorticoids. This Mesocricetus auratus (Golden hamster) protein is Metallothionein-2 (MT2).